Consider the following 510-residue polypeptide: 2,3-bisphosphoglycerate-independent phosphoglycerate mutase (510 aa).

Residues Asp13 and Ser63 each coordinate Mn(2+). Ser63 serves as the catalytic Phosphoserine intermediate. Substrate is bound by residues His124, 154–155 (RD), Arg186, Arg192, 262–265 (RADR), and Lys334. Mn(2+) contacts are provided by Asp401, His405, Asp442, His443, and His461.

This sequence belongs to the BPG-independent phosphoglycerate mutase family. In terms of assembly, monomer. The cofactor is Mn(2+).

It carries out the reaction (2R)-2-phosphoglycerate = (2R)-3-phosphoglycerate. It participates in carbohydrate degradation; glycolysis; pyruvate from D-glyceraldehyde 3-phosphate: step 3/5. In terms of biological role, catalyzes the interconversion of 2-phosphoglycerate and 3-phosphoglycerate. The polypeptide is 2,3-bisphosphoglycerate-independent phosphoglycerate mutase (Vibrio parahaemolyticus serotype O3:K6 (strain RIMD 2210633)).